Reading from the N-terminus, the 281-residue chain is Ribosomal RNA small subunit methyltransferase A (281 aa).

The S-adenosyl-L-methionine site is built by asparagine 36, leucine 38, glycine 63, glutamate 84, aspartate 109, and asparagine 127.

The protein belongs to the class I-like SAM-binding methyltransferase superfamily. rRNA adenine N(6)-methyltransferase family. RsmA subfamily.

It is found in the cytoplasm. The enzyme catalyses adenosine(1518)/adenosine(1519) in 16S rRNA + 4 S-adenosyl-L-methionine = N(6)-dimethyladenosine(1518)/N(6)-dimethyladenosine(1519) in 16S rRNA + 4 S-adenosyl-L-homocysteine + 4 H(+). Its function is as follows. Specifically dimethylates two adjacent adenosines (A1518 and A1519) in the loop of a conserved hairpin near the 3'-end of 16S rRNA in the 30S particle. May play a critical role in biogenesis of 30S subunits. This chain is Ribosomal RNA small subunit methyltransferase A, found in Borreliella afzelii (strain PKo) (Borrelia afzelii).